The sequence spans 126 residues: Small ribosomal subunit protein uS12 (126 aa).

Asp-89 is subject to 3-methylthioaspartic acid.

It belongs to the universal ribosomal protein uS12 family. Part of the 30S ribosomal subunit. Contacts proteins S8 and S17. May interact with IF1 in the 30S initiation complex.

In terms of biological role, with S4 and S5 plays an important role in translational accuracy. Its function is as follows. Interacts with and stabilizes bases of the 16S rRNA that are involved in tRNA selection in the A site and with the mRNA backbone. Located at the interface of the 30S and 50S subunits, it traverses the body of the 30S subunit contacting proteins on the other side and probably holding the rRNA structure together. The combined cluster of proteins S8, S12 and S17 appears to hold together the shoulder and platform of the 30S subunit. This Polynucleobacter asymbioticus (strain DSM 18221 / CIP 109841 / QLW-P1DMWA-1) (Polynucleobacter necessarius subsp. asymbioticus) protein is Small ribosomal subunit protein uS12.